Here is a 265-residue protein sequence, read N- to C-terminus: Apolipoprotein A-I (265 aa).

Residues 1–16 form the signal peptide; that stretch reads MKAAVLIWLFLMGSQA. A run of 2 repeats spans residues 66-87 and 88-109. The tract at residues 66 to 265 is 10 X approximate tandem repeats; that stretch reads LKLLDNWDSL…EEYTKKLSSQ (200 aa). Methionine sulfoxide is present on methionine 108. Residues 110-120 form a 3; half-length repeat; it reads KDLEEVKAQVQ. Repeat copies occupy residues 121 to 142, 143 to 164, 165 to 186, 187 to 208, and 209 to 230. A Methionine sulfoxide modification is found at methionine 134. The 9; half-length repeat unit spans residues 231–241; it reads PALDDLRQGLL. Repeat 10 spans residues 242-265; sequence PVLESFKVSFLSALEEYTKKLSSQ.

This sequence belongs to the apolipoprotein A1/A4/E family. In terms of assembly, homodimer. Interacts with APOA1BP and CLU. Component of a sperm activating protein complex (SPAP), consisting of APOA1, an immunoglobulin heavy chain, an immunoglobulin light chain and albumin. Interacts with NDRG1. Interacts with SCGB3A2. Interacts with NAXE and YJEFN3. In terms of processing, glycosylated. Post-translationally, palmitoylated. Phosphorylation sites are present in the extracellular medium.

It localises to the secreted. In terms of biological role, participates in the reverse transport of cholesterol from tissues to the liver for excretion by promoting cholesterol efflux from tissues and by acting as a cofactor for the lecithin cholesterol acyltransferase (LCAT). As part of the SPAP complex, activates spermatozoa motility. In Aotus nancymaae (Ma's night monkey), this protein is Apolipoprotein A-I (APOA1).